A 189-amino-acid polypeptide reads, in one-letter code: GMP synthase [glutamine-hydrolyzing] subunit A (189 aa).

The region spanning 5 to 189 (KIIVINNYGQ…MNFFKVCEDY (185 aa)) is the Glutamine amidotransferase type-1 domain. The active-site Nucleophile is the cysteine 79. Active-site residues include histidine 166 and glutamate 168.

As to quaternary structure, heterodimer composed of a glutamine amidotransferase subunit (A) and a GMP-binding subunit (B).

It carries out the reaction XMP + L-glutamine + ATP + H2O = GMP + L-glutamate + AMP + diphosphate + 2 H(+). Its pathway is purine metabolism; GMP biosynthesis; GMP from XMP (L-Gln route): step 1/1. Catalyzes the synthesis of GMP from XMP. The sequence is that of GMP synthase [glutamine-hydrolyzing] subunit A from Methanococcoides burtonii (strain DSM 6242 / NBRC 107633 / OCM 468 / ACE-M).